We begin with the raw amino-acid sequence, 407 residues long: Cathepsin D (407 aa).

The signal sequence occupies residues 1-20 (MQTPGVLLLILGLLDASSSA). Residues 21–64 (LIRIPLRKFTSIRRTMTEVGGSVEDLILKGPITKYSMQSSPRTK) constitute a propeptide, activation peptide. The 324-residue stretch at 79 to 402 (YYGEIGIGTP…DREYNRVGFA (324 aa)) folds into the Peptidase A1 domain. 2 disulfides stabilise this stretch: C91-C160 and C110-C117. Residue D97 is part of the active site. N-linked (GlcNAc...) asparagine glycans are attached at residues N134 and N258. The cysteines at positions 281 and 285 are disulfide-linked. D290 is a catalytic residue. C324 and C361 form a disulfide bridge.

It belongs to the peptidase A1 family. As to quaternary structure, occurs as a mixture of both a single chain form and two types of two chain (light and heavy) forms. Interacts with ADAM30; this leads to activation of CTSD. In terms of processing, N- and O-glycosylated. Post-translationally, undergoes proteolytic cleavage and activation by ADAM30.

It localises to the lysosome. It is found in the melanosome. The protein localises to the secreted. Its subcellular location is the extracellular space. It carries out the reaction Specificity similar to, but narrower than, that of pepsin A. Does not cleave the 4-Gln-|-His-5 bond in B chain of insulin.. Its function is as follows. Acid protease active in intracellular protein breakdown. Plays a role in APP processing following cleavage and activation by ADAM30 which leads to APP degradation. This is Cathepsin D (Ctsd) from Rattus norvegicus (Rat).